A 1125-amino-acid chain; its full sequence is Protein efr-3 (1125 aa).

Disordered stretches follow at residues R240–I261, R471–A493, T788–T819, and Q845–K1093. The segment covering S242–T252 has biased composition (polar residues). Low complexity predominate over residues T788 to P798. Over residues Q845–L854 the composition is skewed to polar residues. Low complexity predominate over residues N855–T877. Polar residues-rich tracts occupy residues S878–N896, L975–L1011, and S1046–K1071.

The protein belongs to the EFR3 family.

The chain is Protein efr-3 (efr-3) from Neurospora crassa (strain ATCC 24698 / 74-OR23-1A / CBS 708.71 / DSM 1257 / FGSC 987).